A 145-amino-acid polypeptide reads, in one-letter code: Deoxyuridine 5'-triphosphate nucleotidohydrolase (145 aa).

It belongs to the dUTPase family. The cofactor is Mg(2+).

It catalyses the reaction dUTP + H2O = dUMP + diphosphate + H(+). In terms of biological role, this enzyme is involved in nucleotide metabolism: it produces dUMP, the immediate precursor of thymidine nucleotides and it decreases the intracellular concentration of dUTP so that uracil cannot be incorporated into DNA. This is Deoxyuridine 5'-triphosphate nucleotidohydrolase (DUT) from Fowlpox virus (strain NVSL) (FPV).